The primary structure comprises 209 residues: Thymidylate kinase (209 aa).

Gly11–Thr18 serves as a coordination point for ATP.

It belongs to the thymidylate kinase family.

It catalyses the reaction dTMP + ATP = dTDP + ADP. Its function is as follows. Phosphorylation of dTMP to form dTDP in both de novo and salvage pathways of dTTP synthesis. The chain is Thymidylate kinase from Streptococcus thermophilus (strain ATCC BAA-250 / LMG 18311).